The primary structure comprises 1481 residues: DNA-directed RNA polymerase subunit beta'' (1481 aa).

Residues C217, C291, C298, and C301 each contribute to the Zn(2+) site.

It belongs to the RNA polymerase beta' chain family. RpoC2 subfamily. In terms of assembly, in plastids the minimal PEP RNA polymerase catalytic core is composed of four subunits: alpha, beta, beta', and beta''. When a (nuclear-encoded) sigma factor is associated with the core the holoenzyme is formed, which can initiate transcription. The cofactor is Zn(2+).

It is found in the plastid. Its subcellular location is the chloroplast. It catalyses the reaction RNA(n) + a ribonucleoside 5'-triphosphate = RNA(n+1) + diphosphate. Functionally, DNA-dependent RNA polymerase catalyzes the transcription of DNA into RNA using the four ribonucleoside triphosphates as substrates. The protein is DNA-directed RNA polymerase subunit beta'' of Trieres chinensis (Marine centric diatom).